Here is a 151-residue protein sequence, read N- to C-terminus: MSKIEQIAKDLVMPILEKNNFELVDVEYKKEGSHWYLRVYIDKEGGITLDDCQLVSEYLSDRLDEVDPIEHSYILEVSSPGLDRPLKKPRDFERNIGKEIEISLYTPIDKRKKFEGELIEFTGDKIIILYNGERKEFDMKNVSLVKPVIKF.

This sequence belongs to the RimP family.

It localises to the cytoplasm. Required for maturation of 30S ribosomal subunits. The protein is Ribosome maturation factor RimP of Thermoanaerobacter sp. (strain X514).